The chain runs to 1005 residues: Ephrin type-A receptor 8 (1005 aa).

Positions 1–27 (MAPARGRLPPALWVVTAAAAAATCVSA) are cleaved as a signal peptide. Residues 28-542 (ARGEVNLLDT…KPRPRYDTRT (515 aa)) lie on the Extracellular side of the membrane. The region spanning 31 to 209 (EVNLLDTSTI…YYKKCPAMVR (179 aa)) is the Eph LBD domain. Fibronectin type-III domains are found at residues 328 to 438 (PPSA…TNQA) and 439 to 534 (APSQ…TGKP). 3 N-linked (GlcNAc...) asparagine glycosylation sites follow: Asn-340, Asn-407, and Asn-432. Residues 543-563 (IVWICLTLITGLVVLLLLLIC) form a helical membrane-spanning segment. The mediates interaction with ANKS1A and ANKS1B stretch occupies residues 564 to 570 (KKRHCGY). At 564-1005 (KKRHCGYSKA…TSTQGPRRHL (442 aa)) the chain is on the cytoplasmic side. Positions 589–644 (APPPVFLPLHHPPGKLPEPQFYAEPHTYEEPGRAGRSFTREIEASRIHIEKIIGSG) are mediates interaction with PIK3CG and required for endocytosis. The residue at position 616 (Tyr-616) is a Phosphotyrosine; by autocatalysis. Residues 635 to 896 (IHIEKIIGSG…QIVSVLDALI (262 aa)) enclose the Protein kinase domain. Residues 641 to 649 (IGSGDSGEV) and Lys-667 contribute to the ATP site. Catalysis depends on Asp-760, which acts as the Proton acceptor. Phosphotyrosine; by autocatalysis is present on Tyr-839. Residues 930–994 (GGGLTVGDWL…LGSIQTMRAQ (65 aa)) form the SAM domain. A PDZ-binding motif is present at residues 1003 to 1005 (RHL).

Belongs to the protein kinase superfamily. Tyr protein kinase family. Ephrin receptor subfamily. In terms of assembly, heterotetramer upon binding of the ligand. The heterotetramer is composed of an ephrin dimer and a receptor dimer. Oligomerization is probably required to induce biological responses. May also form heterodimers with other ephrin receptors. Interacts with FYN; possible downstream effector of EPHA8 in regulation of cell adhesion. Interacts with PIK3CG; regulates integrin-mediated cell adhesion to substrate. Interacts with TIAM1; regulates clathrin-mediated endocytosis of EPHA8. Interacts with ANKS1A and ANKS1B; EPHA8 kinase activity-independent but stimulated by EPHA8 ubiquitination. Post-translationally, phosphorylated. Phosphorylation is stimulated upon binding of its ligands including EFNA2, EFNA3 and EFNA5. Autophosphorylation on Tyr-616 is critical for association with FYN. Autophosphorylation on Tyr-839 modulates tyrosine kinase activity. In terms of processing, ubiquitinated. Ubiquitination by CBL regulates the receptor stability and activity through proteasomal degradation. ANKS1A prevents ubiquitination and degradation.

It is found in the cell membrane. The protein resides in the cell projection. Its subcellular location is the early endosome membrane. It catalyses the reaction L-tyrosyl-[protein] + ATP = O-phospho-L-tyrosyl-[protein] + ADP + H(+). In terms of biological role, receptor tyrosine kinase which binds promiscuously GPI-anchored ephrin-A family ligands residing on adjacent cells, leading to contact-dependent bidirectional signaling into neighboring cells. The signaling pathway downstream of the receptor is referred to as forward signaling while the signaling pathway downstream of the ephrin ligand is referred to as reverse signaling. The GPI-anchored ephrin-A EFNA2, EFNA3, and EFNA5 are able to activate EPHA8 through phosphorylation. With EFNA5 may regulate integrin-mediated cell adhesion and migration on fibronectin substrate but also neurite outgrowth. During development of the nervous system also plays a role in axon guidance. Downstream effectors of the EPHA8 signaling pathway include FYN which promotes cell adhesion upon activation by EPHA8 and the MAP kinases in the stimulation of neurite outgrowth. The sequence is that of Ephrin type-A receptor 8 (EPHA8) from Homo sapiens (Human).